The chain runs to 401 residues: Mannonate dehydratase (401 aa).

Belongs to the mannonate dehydratase family. Fe(2+) is required as a cofactor. The cofactor is Mn(2+).

The catalysed reaction is D-mannonate = 2-dehydro-3-deoxy-D-gluconate + H2O. The protein operates within carbohydrate metabolism; pentose and glucuronate interconversion. Catalyzes the dehydration of D-mannonate. This is Mannonate dehydratase from Brucella canis (strain ATCC 23365 / NCTC 10854 / RM-666).